The chain runs to 687 residues: Leucine-rich repeat and fibronectin type III domain-containing protein 1-like protein (687 aa).

The first 17 residues, 1–17 (MEWLIFSLLLLAVSASG), serve as a signal peptide directing secretion. In terms of domain architecture, LRRNT spans 18–51 (QLCPKRCMCQNLSPSLAILCAKTGLLFVPTVIDR). Over 18-527 (QLCPKRCMCQ…LRSHFLGGTM (510 aa)) the chain is Extracellular. LRR repeat units lie at residues 52–73 (RTVELRLTENFITAVKRRDFAN), 76–97 (SLLHLTLSRNTISQIMPYTFAD), 100–121 (RLRALHLDSNRLSVITDDHFRG), 124–145 (NLRHLILANNQLHNISPHAFDD), 149–170 (TLEDLDLSYNNLVDIPWDTIGR), 173–194 (NVNTLNMDHNLIEHVPLGIFSN), and 197–218 (KLARLDMTSNKLKKIPPDPLFL). A glycan (N-linked (GlcNAc...) asparagine) is linked at Asn-73. Positions 241–287 (NPLHCNCELLWLRRLTREDDLETCASPPDLTAKYFWTIPEEEFICDP) constitute an LRRCT domain. Residues 287-376 (PPVITRKSPK…STGTVELVVS (90 aa)) enclose the Ig-like domain. The cysteines at positions 309 and 358 are disulfide-linked. Asn-331, Asn-340, Asn-346, Asn-383, Asn-410, and Asn-450 each carry an N-linked (GlcNAc...) asparagine glycan. The disordered stretch occupies residues 384-412 (STNRIREPDPGPSDILTSAKSTSSVSNET). Residues 398-412 (ILTSAKSTSSVSNET) show a composition bias toward polar residues. Residues 415-510 (QERKVVLAEL…VGCVTFVTET (96 aa)) form the Fibronectin type-III domain. The helical transmembrane segment at 528–548 (IIIIGGIIVASVLVFIIILMI) threads the bilayer. The Cytoplasmic segment spans residues 549–687 (RYKVYSQHGA…AQRDWSDFKI (139 aa)). 2 disordered regions span residues 563-601 (GTAMTNVRSQTNGGQAAGQVPRSSSKIVEGQEASGGSLG) and 630-687 (EDIV…DFKI). 2 stretches are compositionally biased toward polar residues: residues 565 to 576 (AMTNVRSQTNGG) and 657 to 672 (EGTSSDTQEDTASPQV). Residues 673 to 687 (SDEKKAQRDWSDFKI) are compositionally biased toward basic and acidic residues.

The protein belongs to the LRFN family.

Its subcellular location is the membrane. It localises to the synapse. May be involved in the regulation of excitatory synapses. The sequence is that of Leucine-rich repeat and fibronectin type III domain-containing protein 1-like protein (lrfn1l) from Danio rerio (Zebrafish).